Consider the following 357-residue polypeptide: Sorbitol dehydrogenase (357 aa).

Position 2 is an N-acetylalanine (alanine 2). Cysteine 45 is a Zn(2+) binding site. Tyrosine 51 provides a ligand contact to substrate. Zn(2+)-binding residues include histidine 70 and glutamate 71. Glutamate 156 provides a ligand contact to substrate. NAD(+) is bound by residues isoleucine 184, aspartate 204, and arginine 209. A phosphoserine mark is found at serine 211 and serine 225. Residues 273-275 and 297-299 each bind NAD(+); these read VGL and VFR. Substrate-binding residues include arginine 299 and tyrosine 300.

Belongs to the zinc-containing alcohol dehydrogenase family. In terms of assembly, homotetramer. It depends on Zn(2+) as a cofactor.

Its subcellular location is the mitochondrion membrane. It localises to the cell projection. The protein resides in the cilium. The protein localises to the flagellum. The catalysed reaction is xylitol + NAD(+) = D-xylulose + NADH + H(+). It catalyses the reaction L-iditol + NAD(+) = keto-L-sorbose + NADH + H(+). It carries out the reaction keto-D-fructose + NADH + H(+) = D-sorbitol + NAD(+). Polyol dehydrogenase that catalyzes the reversible NAD(+)-dependent oxidation of various sugar alcohols. Is active with xylitol, L-iditol and D-sorbitol (D-glucitol) as substrates, leading to the C2-oxidized products D-xylulose, L-sorbose and D-fructose, respectively. Is a key enzyme in the polyol pathway that interconverts glucose and fructose via sorbitol, which constitutes an important alternate route for glucose metabolism. May play a role in sperm motility by using sorbitol as an alternative energy source for sperm motility. This is Sorbitol dehydrogenase (SORD) from Pongo abelii (Sumatran orangutan).